We begin with the raw amino-acid sequence, 291 residues long: Nucleoid occlusion protein (291 aa).

The segment at residues 155–174 (EALAQRLGKGQSTVANKLRL) is a DNA-binding region (H-T-H motif).

It belongs to the ParB family.

Its subcellular location is the cytoplasm. It localises to the nucleoid. Functionally, effects nucleoid occlusion by binding relatively nonspecifically to DNA and preventing the assembly of the division machinery in the vicinity of the nucleoid, especially under conditions that disturb the cell cycle. It helps to coordinate cell division and chromosome segregation by preventing the formation of the Z ring through the nucleoid, which would cause chromosome breakage. This chain is Nucleoid occlusion protein, found in Bacillus pumilus (strain SAFR-032).